The sequence spans 274 residues: Putative phosphoenolpyruvate synthase regulatory protein (274 aa).

ADP is bound at residue 154 to 161 (GVSRCGKT).

This sequence belongs to the pyruvate, phosphate/water dikinase regulatory protein family. PSRP subfamily.

The catalysed reaction is [pyruvate, water dikinase] + ADP = [pyruvate, water dikinase]-phosphate + AMP + H(+). It carries out the reaction [pyruvate, water dikinase]-phosphate + phosphate + H(+) = [pyruvate, water dikinase] + diphosphate. Its function is as follows. Bifunctional serine/threonine kinase and phosphorylase involved in the regulation of the phosphoenolpyruvate synthase (PEPS) by catalyzing its phosphorylation/dephosphorylation. The sequence is that of Putative phosphoenolpyruvate synthase regulatory protein from Pseudomonas aeruginosa (strain LESB58).